Consider the following 175-residue polypeptide: Crossover junction endodeoxyribonuclease RuvC (175 aa).

Catalysis depends on residues Asp16, Glu76, and Asp148. Mg(2+) contacts are provided by Asp16, Glu76, and Asp148.

The protein belongs to the RuvC family. In terms of assembly, homodimer which binds Holliday junction (HJ) DNA. The HJ becomes 2-fold symmetrical on binding to RuvC with unstacked arms; it has a different conformation from HJ DNA in complex with RuvA. In the full resolvosome a probable DNA-RuvA(4)-RuvB(12)-RuvC(2) complex forms which resolves the HJ. Mg(2+) serves as cofactor.

It is found in the cytoplasm. It carries out the reaction Endonucleolytic cleavage at a junction such as a reciprocal single-stranded crossover between two homologous DNA duplexes (Holliday junction).. The RuvA-RuvB-RuvC complex processes Holliday junction (HJ) DNA during genetic recombination and DNA repair. Endonuclease that resolves HJ intermediates. Cleaves cruciform DNA by making single-stranded nicks across the HJ at symmetrical positions within the homologous arms, yielding a 5'-phosphate and a 3'-hydroxyl group; requires a central core of homology in the junction. The consensus cleavage sequence is 5'-(A/T)TT(C/G)-3'. Cleavage occurs on the 3'-side of the TT dinucleotide at the point of strand exchange. HJ branch migration catalyzed by RuvA-RuvB allows RuvC to scan DNA until it finds its consensus sequence, where it cleaves and resolves the cruciform DNA. This Bradyrhizobium diazoefficiens (strain JCM 10833 / BCRC 13528 / IAM 13628 / NBRC 14792 / USDA 110) protein is Crossover junction endodeoxyribonuclease RuvC.